A 373-amino-acid polypeptide reads, in one-letter code: Velvet complex subunit RYP3 (373 aa).

The segment covering 1-10 (MYTLKQDRPH) has biased composition (basic and acidic residues). 2 disordered regions span residues 1-26 (MYTL…LQHG) and 344-373 (RKDG…ENEG). The Velvet domain occupies 48–344 (VYEGRIYSLD…AFQGIKIPIR (297 aa)). The span at 364–373 (GEGEDWENEG) shows a compositional bias: acidic residues.

The protein belongs to the velvet family. VelB subfamily. Component of the heterotrimeric velvet complex composed of LAE1, VEL1 and VEL2; VEL1A acting as a bridging protein between LAE1 and VEL2. Forms a heterodimeric complex with VOS1; the formation of the VEL2-VOS1 complex is light-dependent.

The protein resides in the nucleus. Its subcellular location is the cytoplasm. In terms of biological role, component of the velvet transcription factor complex that controls sexual/asexual developmental ratio in response to light, promoting sexual development in the darkness while stimulating asexual sporulation under illumination. The velvet complex acts as a global regulator for secondary metabolite gene expression. Component of the RYP2-RYP3 heterodimeric complex that plays a dual role in activating genes associated with spore maturation and repressing certain development-associated genes. The complex binds DNA through the DNA-binding domain of RYP2 that recognizes an 11-nucleotide consensus sequence 5'-CTGGCCGCGGC-3' consisting of two motifs in the promoters of key developmental regulatory genes. Required for viable spore production and regulation of sporulation in response to temperature, as well as for the switch to yeast-form in the presence of host cells. In Ajellomyces capsulatus (Darling's disease fungus), this protein is Velvet complex subunit RYP3 (RYP3).